The sequence spans 775 residues: MASLIYRQLLTNSYTVELSDEIKTIGSEKSQNVTINPGPFAQTTYAPVTWRHGEVNDSTTVEPVLDGPYQPTSFKPPNDYWILLNPINKGVVFKGTNRTDVWVAILLIEQRVPSQDRQYTLFGEVKQITVENSSDKWKFFEMFRNNANIDFQLQRPLTSDTKLAGFLTHGGRVWTFNGETPHATTDYSTTSNLPDVEVVIHTEFYIIPRSQESKCNEYINTGLPPMQNTRNVVPVALSSRSITYQRAQVNEDIIISKTSLWKEMQYNRDITIRFKFGNSIVKLGGLGYKWSEVSFKAANYQYNYLRDGEQVTAHTTCSVNGVNNFSYNGGSLPTDFSVSRYELIKENSYVYIDYWDDSQAFKNMVYVRSLAANLNSVKCSGGNYNFKIPVGAWPVMSGGAVSLHFAGVTLSTQFTNFVSLNSLRFRFSLTVEEPSFSILRTRVSGLYGLPAANPNNGNEYYEIAGRFSLILLVPSNDDYQTPIMNSVTVRQDLERQLGDLREEFNSLSQEIAMTQLIDLALLPLDMFSMFSGIKSTIDVAKSMATNVMKKFKKSGLATSISELTGSLPSAASSVSRSSSIRSNISSISVWTDVSEQIADASNSVRSISTQTSAISKRLRLREITTQTEGMNFDDISAAVLKTPLDKSTHISPDTLPDIITESSEKFIPKRAYRVLKNDEVMEADVDGKFFAYRVDTFEEVPFDVDKFVNLATASPVISAIIDFKTLKNLNDNYGITRSQALDLIRSDPRVLRDFINQNNPIIKNRIEQLILQCRL.

Residues L65 to L223 are spike head. Residues A247 to D478 form a spike body and stalk (antigen domain) region. Positions D307–E309 match the DGE motif; interaction with ITGA2/ITGB1 heterodimer motif. C317 and C379 are oxidised to a cystine. Positions I388 to V408 are hydrophobic; possible role in virus entry into host cell. The YGL motif; interaction with ITGA4 signature appears at Y447–L449. Residues I483 to Q515 are a coiled coil. Positions Q509 to L775 are spike foot.

The protein belongs to the rotavirus VP4 family. In terms of assembly, homotrimer. VP4 adopts a dimeric appearance above the capsid surface, while forming a trimeric base anchored inside the capsid layer. Only hints of the third molecule are observed above the capsid surface. It probably performs a series of molecular rearrangements during viral entry. Prior to trypsin cleavage, it is flexible. The priming trypsin cleavage triggers its rearrangement into rigid spikes with approximate two-fold symmetry of their protruding parts. After an unknown second triggering event, cleaved VP4 may undergo another rearrangement, in which two VP5* subunits fold back on themselves and join a third subunit to form a tightly associated trimer, shaped like a folded umbrella. Interacts with VP6. Interacts with VP7. Homotrimer. The trimer is coiled-coil stabilized by its C-terminus, however, its N-terminus, known as antigen domain or 'body', seems to be flexible allowing it to self-associate either as a dimer or a trimer. In terms of processing, proteolytic cleavage by trypsin results in activation of VP4 functions and greatly increases infectivity. The penetration into the host cell is dependent on trypsin treatment of VP4. It produces two peptides, VP5* and VP8* that remain associated with the virion. Cleavage of VP4 by trypsin probably occurs in vivo in the lumen of the intestine prior to infection of enterocytes. Trypsin seems to be incorporated into the three-layered viral particles but remains inactive as long as the viral outer capsid is intact and would only be activated upon the solubilization of the latter.

The protein resides in the virion. The protein localises to the host rough endoplasmic reticulum. It is found in the host cell membrane. It localises to the host cytoplasm. Its subcellular location is the host cytoskeleton. The protein resides in the host endoplasmic reticulum-Golgi intermediate compartment. Functionally, spike-forming protein that mediates virion attachment to the host epithelial cell receptors and plays a major role in cell penetration, determination of host range restriction and virulence. Rotavirus attachment and entry into the host cell probably involves multiple sequential contacts between the outer capsid proteins VP4 and VP7, and the cell receptors. It is subsequently lost, together with VP7, following virus entry into the host cell. Following entry into the host cell, low intracellular or intravesicular Ca(2+) concentration probably causes the calcium-stabilized VP7 trimers to dissociate from the virion. This step is probably necessary for the membrane-disrupting entry step and the release of VP4, which is locked onto the virion by VP7. During the virus exit from the host cell, VP4 seems to be required to target the newly formed virions to the host cell lipid rafts. Its function is as follows. Forms the spike 'foot' and 'body' and acts as a membrane permeabilization protein that mediates release of viral particles from endosomal compartments into the cytoplasm. During entry, the part of VP5* that protrudes from the virus folds back on itself and reorganizes from a local dimer to a trimer. This reorganization may be linked to membrane penetration by exposing VP5* hydrophobic region. In integrin-dependent strains, VP5* targets the integrin heterodimer ITGA2/ITGB1 for cell attachment. Forms the head of the spikes and mediates the recognition of specific host cell surface glycans. It is the viral hemagglutinin and an important target of neutralizing antibodies. In sialic acid-dependent strains, VP8* binds to host cell sialic acid, most probably a ganglioside, providing the initial contact. In some other strains, VP8* mediates the attachment to histo-blood group antigens (HBGAs) for viral entry. The chain is Outer capsid protein VP4 from Rotavirus A (strain RVA/Pig/United States/Gottfried/1983/G4P2B[6]) (RV-A).